The chain runs to 477 residues: Trigger factor (477 aa).

Residues Glu-163–Val-248 enclose the PPIase FKBP-type domain. Positions Lys-408–Pro-461 are enriched in basic and acidic residues. The segment at Lys-408–Lys-477 is disordered.

Belongs to the FKBP-type PPIase family. Tig subfamily.

The protein localises to the cytoplasm. The catalysed reaction is [protein]-peptidylproline (omega=180) = [protein]-peptidylproline (omega=0). Functionally, involved in protein export. Acts as a chaperone by maintaining the newly synthesized protein in an open conformation. Functions as a peptidyl-prolyl cis-trans isomerase. The polypeptide is Trigger factor (Pelagibacter ubique (strain HTCC1062)).